Here is a 227-residue protein sequence, read N- to C-terminus: 2-C-methyl-D-erythritol 4-phosphate cytidylyltransferase (227 aa).

This sequence belongs to the IspD/TarI cytidylyltransferase family. IspD subfamily.

It catalyses the reaction 2-C-methyl-D-erythritol 4-phosphate + CTP + H(+) = 4-CDP-2-C-methyl-D-erythritol + diphosphate. Its pathway is isoprenoid biosynthesis; isopentenyl diphosphate biosynthesis via DXP pathway; isopentenyl diphosphate from 1-deoxy-D-xylulose 5-phosphate: step 2/6. Its function is as follows. Catalyzes the formation of 4-diphosphocytidyl-2-C-methyl-D-erythritol from CTP and 2-C-methyl-D-erythritol 4-phosphate (MEP). In Caldanaerobacter subterraneus subsp. tengcongensis (strain DSM 15242 / JCM 11007 / NBRC 100824 / MB4) (Thermoanaerobacter tengcongensis), this protein is 2-C-methyl-D-erythritol 4-phosphate cytidylyltransferase.